Reading from the N-terminus, the 404-residue chain is Ribosomal RNA large subunit methyltransferase F (404 aa).

2 stretches are compositionally biased toward basic residues: residues 1–10 and 18–29; these read MTKHSQKQNR and QTRRKKPAGKLK. Disordered regions lie at residues 1–54, 156–177, and 289–308; these read MTKH…HERN, GTRQ…QRYK, and RAAK…PDAN. A compositionally biased stretch (basic and acidic residues) spans 30 to 54; that stretch reads AKSEAKLDTRGKPETTEKKGLHERN. The segment covering 157–172 has biased composition (polar residues); that stretch reads TRQNVPYASKPESSAP.

This sequence belongs to the methyltransferase superfamily. METTL16/RlmF family.

It localises to the cytoplasm. The enzyme catalyses adenosine(1618) in 23S rRNA + S-adenosyl-L-methionine = N(6)-methyladenosine(1618) in 23S rRNA + S-adenosyl-L-homocysteine + H(+). Its function is as follows. Specifically methylates the adenine in position 1618 of 23S rRNA. The polypeptide is Ribosomal RNA large subunit methyltransferase F (Shewanella sediminis (strain HAW-EB3)).